The chain runs to 94 residues: uncharacterized protein (94 aa).

It to M.tuberculosis Rv2632c.

This is an uncharacterized protein from Mycobacterium tuberculosis (strain CDC 1551 / Oshkosh).